A 1617-amino-acid polypeptide reads, in one-letter code: ATP-binding cassette sub-family A member 6 (1617 aa).

A helical transmembrane segment spans residues 31–51; it reads LLEWGLSILLGLCIALFSSSM. 2 N-linked (GlcNAc...) asparagine glycosylation sites follow: asparagine 84 and asparagine 109. The next 6 helical transmembrane spans lie at 222–242, 268–288, 297–317, 327–347, 355–375, and 397–417; these read MFILFFLLHFSPLVYFISLNV, GLIYAGFIFIISIFVTIIITF, FMVIFILFFLYGLSLVALVFL, LTNLVVFLLTLFWGCLGFTVF, LEWILNICSPFAFTTGMIQII, and IATFSMLLLDGLIYLLLALYF. Residues 478–713 form the ABC transporter 1 domain; sequence IRIRNVKKEY…WGLGYHLSLH (236 aa). An ATP-binding site is contributed by 514–521; it reads GHSGAGKS. The chain crosses the membrane as a helical span at residues 854–874; that stretch reads VLLTLLLVFGIAIFPLIVENI. N-linked (GlcNAc...) asparagine glycosylation occurs at asparagine 940. 6 consecutive transmembrane segments (helical) span residues 1007-1027, 1062-1082, 1094-1114, 1127-1147, 1150-1170, and 1194-1214; these read IGLWTGLPDGSFFLFLVLCSI, ALVDVSFFILILLLMYLIFYI, IVFALVIVTPGYAASLVFFIY, SGLWSFYFFFASTIMFSITLI, FDLSILITTMVLVPSYTLLGF, and ATDFLVCFIPYFQTLLFVFVL. One can recognise an ABC transporter 2 domain in the interval 1288 to 1513; sequence GQKKSCFSKR…LGKDYILELK (226 aa). ATP is bound at residue 1320 to 1327; that stretch reads GPNGAGKS.

The protein belongs to the ABC transporter superfamily. ABCA family. Widely expressed with higher expression in liver.

It is found in the golgi apparatus membrane. Its function is as follows. Probable transporter which may play a role in macrophage lipid transport and homeostasis. In Homo sapiens (Human), this protein is ATP-binding cassette sub-family A member 6 (ABCA6).